Reading from the N-terminus, the 379-residue chain is MTNATDTNKTLGESMFAQCGYAQDAIDKRVSQVWHEIFEGPNKFYWENDEGLAYVMDTGNNDVRTEGMSYAMMIALQYDRKDVFDKLWGWVMRHMYMKDGHHAHYFAWSVAPDGTPNSNGPAPDGEEYFAMDLFLASRRWGDGEDIYEYSAWGREILRYCVHKGERYDGEPMWNPDNKLIKFIPETEWSDPSYHLPHFYEVFAEEADEEDRPFWHEAAAASRRYLQAACDERTGMNAEYADYDGKPHVDESNHWHFYSDAYRTAANIGLDAAWNGPQEVLCDRVAALQRFFLTHDRTSVYAIDGTAVDEVVLHPVGFLAATAQGALAAVHSAQPDAEHNAREWVRMLWNTPMRTGTRRYYDNFLYAFAMLALSGKYRYE.

The active-site Proton donor is E66. Residue D259 is the Proton acceptor of the active site.

This sequence belongs to the glycosyl hydrolase 8 (cellulase D) family.

The enzyme catalyses Hydrolysis of (1-&gt;4)-beta-D-xylose residues from the reducing end of oligosaccharides.. Hydrolyzes xylooligosaccharides with a degree of polymerization of greater than or equal to 3, releasing xylose from the reducing end. Has low activity on birchwood xylan, oat spelt xylan and arabinoxylan. This is Reducing end xylose-releasing exo-oligoxylanase from Bifidobacterium adolescentis (strain ATCC 15703 / DSM 20083 / NCTC 11814 / E194a).